We begin with the raw amino-acid sequence, 1195 residues long: Probable beta-tubulin polyglutamylase (1195 aa).

Residues 1 to 110 (MSQKDIYNKY…QTEMTDNQNE (110 aa)) are disordered. Composition is skewed to acidic residues over residues 17-27 (DQQEEDDDENQ) and 44-79 (QGED…EENN). Coiled-coil stretches lie at residues 59-103 (DEEQ…QQTE) and 144-260 (QDMD…QSEQ). Residues 80-89 (QDQQNNSESN) are compositionally biased toward low complexity. Over residues 90-110 (LQYDKTNQKNQQTEMTDNQNE) the composition is skewed to polar residues. A disordered region spans residues 281-343 (PKNDVDQYTG…NKKEQAKKQQ (63 aa)). The span at 294–316 (DSGESDEEANNEDDDEDEDDESE) shows a compositional bias: acidic residues. A compositionally biased stretch (basic residues) spans 322 to 334 (RKNKAQLLKKKNN). The TTL domain maps to 350-703 (KQTLVLNVAD…TCKAKNEIIN (354 aa)). ATP is bound by residues 500-503 (QRYL), lysine 513, and aspartate 515. The interval 674 to 756 (PLDSYIKKNT…GFERIFPMED (83 aa)) is c-MTBD region. Residues 783–862 (RNTKKVTEDP…ETIQCEDQEQ (80 aa)) form a disordered region. Positions 825–849 (PNSQTTINKGIPGQNGQRPSSSQLN) are enriched in polar residues. A compositionally biased stretch (acidic residues) spans 850–860 (EEGETIQCEDQ).

It is found in the cytoplasm. It localises to the cytoskeleton. The protein resides in the cell projection. The protein localises to the cilium. Its subcellular location is the cilium basal body. Functionally, probable tubulin polyglutamylase with a strong preference for beta-tubulin. This Tetrahymena thermophila (strain SB210) protein is Probable beta-tubulin polyglutamylase (Ttll6a).